Consider the following 107-residue polypeptide: Iron-binding protein IscA (107 aa).

The Fe cation site is built by cysteine 35, cysteine 99, and cysteine 101.

The protein belongs to the HesB/IscA family. Homodimer; may form tetramers and higher multimers. The cofactor is Fe cation.

Functionally, is able to transfer iron-sulfur clusters to apo-ferredoxin. Multiple cycles of [2Fe2S] cluster formation and transfer are observed, suggesting that IscA acts catalytically. Recruits intracellular free iron so as to provide iron for the assembly of transient iron-sulfur cluster in IscU in the presence of IscS, L-cysteine and the thioredoxin reductase system TrxA/TrxB. This Klebsiella pneumoniae subsp. pneumoniae (strain ATCC 700721 / MGH 78578) protein is Iron-binding protein IscA.